A 445-amino-acid polypeptide reads, in one-letter code: Cryptochrome DASH (445 aa).

Positions 4–137 (KIGLYWFTFD…VIVQHSVRSL (134 aa)) constitute a Photolyase/cryptochrome alpha/beta domain.

Belongs to the DNA photolyase class-1 family. It depends on FAD as a cofactor. (6R)-5,10-methylene-5,6,7,8-tetrahydrofolate serves as cofactor.

In terms of biological role, may have a photoreceptor function. Binds DNA; probably functions as a transcriptional repressor. The protein is Cryptochrome DASH (cry) of Vibrio parahaemolyticus serotype O3:K6 (strain RIMD 2210633).